The primary structure comprises 244 residues: 7-cyano-7-deazaguanine synthase (244 aa).

19 to 29 (FSGGQDSTTCL) contacts ATP. 4 residues coordinate Zn(2+): cysteine 207, cysteine 222, cysteine 225, and cysteine 228.

The protein belongs to the QueC family. The cofactor is Zn(2+).

The enzyme catalyses 7-carboxy-7-deazaguanine + NH4(+) + ATP = 7-cyano-7-deazaguanine + ADP + phosphate + H2O + H(+). Its pathway is purine metabolism; 7-cyano-7-deazaguanine biosynthesis. Catalyzes the ATP-dependent conversion of 7-carboxy-7-deazaguanine (CDG) to 7-cyano-7-deazaguanine (preQ(0)). The sequence is that of 7-cyano-7-deazaguanine synthase from Bordetella avium (strain 197N).